The following is a 252-amino-acid chain: MSDWNPSLYLHFAAERSRPAVELLARVPLENIKYVADLGCGPGNSTALLHQRWPAARITGIDSSPAMIAEARSALPDCQFVEADIRNWQPEQALDLIFANASLQWLPDHYELFPHLVSLLNPQGVLAVQMPDNWLEPTHVLMREVAWEQNYPDRGREPLAGVHAYYDILSEAGCEVDIWRTTYYHQMPSHQAIIDWVTATGLRPWLQDLTESEQQLFLTRYHQMLEEQYPLQENEQILLAFPRLFIVARRTE.

This sequence belongs to the methyltransferase superfamily. Tam family.

It is found in the cytoplasm. It catalyses the reaction trans-aconitate + S-adenosyl-L-methionine = (E)-3-(methoxycarbonyl)pent-2-enedioate + S-adenosyl-L-homocysteine. Its function is as follows. Catalyzes the S-adenosylmethionine monomethyl esterification of trans-aconitate. The chain is Trans-aconitate 2-methyltransferase from Escherichia coli (strain SE11).